Reading from the N-terminus, the 231-residue chain is MAKLTKRQKAIAEKIEAGKSYNFVDAAALLTELSTVKFSESIDVAVNLGVDPRKSDQVVRSATVLPHGTGKTVRVAVFTQGPAAEAALAAGADRVGMDDLAAEMKAGDLNYDVVIASPDAMRVVGQLGQVLGPRGLMPNPKVGTVTPDVATAVKNAKAGQVRYRTDKNGIIHTSVGKVGFDAVKLKENVEALIADLKRIKPASSKGIYVKRITLSTTMGPGLVIDQGSLEA.

The protein belongs to the universal ribosomal protein uL1 family. As to quaternary structure, part of the 50S ribosomal subunit.

Functionally, binds directly to 23S rRNA. The L1 stalk is quite mobile in the ribosome, and is involved in E site tRNA release. Protein L1 is also a translational repressor protein, it controls the translation of the L11 operon by binding to its mRNA. This chain is Large ribosomal subunit protein uL1, found in Pseudomonas syringae pv. tomato (strain ATCC BAA-871 / DC3000).